A 216-amino-acid chain; its full sequence is ATP phosphoribosyltransferase (216 aa).

This sequence belongs to the ATP phosphoribosyltransferase family. Short subfamily. Heteromultimer composed of HisG and HisZ subunits.

The protein localises to the cytoplasm. It carries out the reaction 1-(5-phospho-beta-D-ribosyl)-ATP + diphosphate = 5-phospho-alpha-D-ribose 1-diphosphate + ATP. It participates in amino-acid biosynthesis; L-histidine biosynthesis; L-histidine from 5-phospho-alpha-D-ribose 1-diphosphate: step 1/9. Functionally, catalyzes the condensation of ATP and 5-phosphoribose 1-diphosphate to form N'-(5'-phosphoribosyl)-ATP (PR-ATP). Has a crucial role in the pathway because the rate of histidine biosynthesis seems to be controlled primarily by regulation of HisG enzymatic activity. In Microcystis aeruginosa (strain NIES-843 / IAM M-2473), this protein is ATP phosphoribosyltransferase.